A 226-amino-acid chain; its full sequence is Cobalt transport protein CbiM 1 (226 aa).

The next 6 helical transmembrane spans lie at Gly-6–Tyr-26, Met-43–Val-63, Leu-75–Phe-95, Thr-107–Phe-127, Phe-135–Thr-155, and Val-181–Met-201.

This sequence belongs to the CbiM family. As to quaternary structure, forms an energy-coupling factor (ECF) transporter complex composed of an ATP-binding protein (A component, CbiO), a transmembrane protein (T component, CbiQ) and 2 possible substrate-capture proteins (S components, CbiM and CbiN) of unknown stoichimetry.

The protein localises to the cell inner membrane. The protein operates within cofactor biosynthesis; adenosylcobalamin biosynthesis. Functionally, part of the energy-coupling factor (ECF) transporter complex CbiMNOQ involved in cobalt import. The polypeptide is Cobalt transport protein CbiM 1 (cbim1) (Pelobacter propionicus (strain DSM 2379 / NBRC 103807 / OttBd1)).